The following is a 248-amino-acid chain: Triosephosphate isomerase (248 aa).

9–11 contributes to the substrate binding site; that stretch reads NWK. His94 functions as the Electrophile in the catalytic mechanism. Glu166 acts as the Proton acceptor in catalysis. Substrate is bound by residues Gly172, Ser212, and 233-234; that span reads GG.

Belongs to the triosephosphate isomerase family. Homodimer.

Its subcellular location is the cytoplasm. It catalyses the reaction D-glyceraldehyde 3-phosphate = dihydroxyacetone phosphate. Its pathway is carbohydrate biosynthesis; gluconeogenesis. The protein operates within carbohydrate degradation; glycolysis; D-glyceraldehyde 3-phosphate from glycerone phosphate: step 1/1. Functionally, involved in the gluconeogenesis. Catalyzes stereospecifically the conversion of dihydroxyacetone phosphate (DHAP) to D-glyceraldehyde-3-phosphate (G3P). This chain is Triosephosphate isomerase, found in Clostridium botulinum (strain Langeland / NCTC 10281 / Type F).